A 622-amino-acid polypeptide reads, in one-letter code: Pyranose 2-oxidase (622 aa).

The signal sequence occupies residues 1–28 (MSTSSSDPFYNFAKTSFKSAAAQKASAT). Positions 29–38 (SLPPLPGPDQ) are excised as a propeptide. At H167 the chain carries Tele-8alpha-FAD histidine. Positions 448 and 450 each coordinate substrate. H548 serves as the catalytic Proton acceptor. N593 is a catalytic residue.

The protein belongs to the GMC oxidoreductase family. As to quaternary structure, homotetramer. The cofactor is FAD.

Its subcellular location is the periplasm. It catalyses the reaction D-glucose + O2 = 2-dehydro-D-glucose + H2O2. Its function is as follows. Catalyzes the oxidation of various aldopyranoses and disaccharides on carbon-2 to the corresponding 2-keto sugars concomitant with the reduction of O(2) to H(2)O(2). Plays an important role in lignin degradation of wood rot fungi by supplying the essential cosubstrate H(2)O(2) for the ligninolytic peroxidases, lignin peroxidase and manganese-dependent peroxidase. The polypeptide is Pyranose 2-oxidase (p2ox) (Trametes pubescens (White-rot fungus)).